The primary structure comprises 1166 residues: Folliculin-interacting protein 1 (1166 aa).

The uDENN FNIP1/2-type domain occupies 37–478; the sequence is FDPSQIRLIV…TVMPNGQPPI (442 aa). Phosphoserine; by AMPK occurs at positions 220, 230, 232, and 261. The residue at position 294 (T294) is a Phosphothreonine. S296 bears the Phosphoserine mark. In terms of domain architecture, cDENN FNIP1/2-type spans 486 to 1092; sequence SSQSVDMLAK…VSNLLHSTLQ (607 aa). At S593 the chain carries Phosphoserine; by AMPK. S594 carries the phosphoserine modification. Zn(2+) is bound by residues C608 and C610. The short motif at 608–615 is the Cys degron element; the sequence is CNCKYCSH. The KY-finger stretch occupies residues 611–612; it reads KY. The Zn(2+) site is built by C613 and H615. 2 positions are modified to phosphoserine: S760 and S763. 2 disordered regions span residues 781–817 and 912–956; these read TKPL…VSEE and LVPH…HDMT. 2 stretches are compositionally biased toward basic and acidic residues: residues 783–805 and 915–925; these read PLKE…KDQS and HGDKESSDKKI. The interval 929–1166 is interaction with HSP90AA1; sequence TEWDIPRNES…HSPYVAQILL (238 aa). Residue S938 is modified to Phosphoserine; alternate; by CK2. Residue S938 is glycosylated (O-linked (GlcNAc) serine; alternate). Phosphoserine; by CK2 occurs at positions 939, 941, 946, and 948. One can recognise a dDENN FNIP1/2-type domain in the interval 1102–1157; it reads FCVMHLEDRLQELYFKSKMLSEYLRGQMRVHVKELGVVLGIESSDLPLLAAVASTH. Residue K1119 forms a Glycyl lysine isopeptide (Lys-Gly) (interchain with G-Cter in ubiquitin) linkage.

Belongs to the FNIP family. In terms of assembly, homodimer and homomultimer. Heterodimer and heteromultimer with FNIP2. Interacts with FLCN (via C-terminus). Component of the lysosomal folliculin complex (LFC), composed of FLCN, FNIP1 (or FNIP2), RagA/RRAGA or RagB/RRAGB GDP-bound, RagC/RRAGC or RagD/RRAGD GTP-bound, and Ragulator. Interacts with HSPCA and with the PRKAA1, PRKAB1 and PRKAG1 subunits of 5'-AMP-activated protein kinase (AMPK). Phosphorylated FLCN and AMPK are preferentially bound. Interacts with HSP70, STIP1, PTGES3, CDC37, BRAF, GCR and CDK4. Interacts with HSP90AA1; the interaction inhibits HSP90AA1 ATPase activity. Interacts with ATP2A2. In terms of processing, phosphorylated by AMPK in response to energetic stress. Phosphorylation by AMPK in response to mitochondrial damage promotes inactivation of the non-canonical mTORC1 signaling, nuclear translocation of TFEB and TFE3, inducing transcription of lysosomal or autophagy genes. Sequential phosphorylation by CK2 promotes its gradual interaction with HSP90AA1/Hsp90. Priming phosphorylation at Ser-938 is followed by relay phosphorylation at Ser-939, Ser-941, Ser-946 and Ser-948, promoting its gradual interaction with HSP90AA1/Hsp90. This leads to incremental inhibition of HSP90AA1/Hsp90 ATPase activity and gradual activation of both kinase and non-kinase clients. Dephosphorylated by protein phosphatase 5 (PP5), promoting glycosylation by OGT. GlcNAcylation at Ser-938 by OGT following dephosphorylation by protein phosphatase 5 (PP5) promotes ubiquitination and degradation by the proteasome. Post-translationally, ubiquitinated through 'Lys-11' linkage of ubiquitin moieties at Lys-1119 following glycosylation by OGT, leading to its degradation by the proteasome. Ubiquitinated by the CRL2(FEM1B) complex in response to reductive stress: reductive stress causes reduction of the conserved Cys degron in FNIP1, followed by zinc-binding, zinc acting as a molecular glue for recognition by the CRL2(FEM1B) complex. Ubiquitination leads to FNIP1 degradation, and activation of mitochondria to recalibrate reactive oxygen species (ROS). In terms of processing, oxidation of the Cys degron in normal conditions promotes its stabilization by preventing recognition and ubiquitination by the CRL2(FEM1B) complex. In terms of tissue distribution, strong expression is found in the heart, liver placenta, muscle, nasal mucosa, salivary gland and uvula and moderate expression in kidney and lung. Higher levels detected in clear cell renal cell carcinoma (RCC) and chromophobe RCC than in normal kidney tissue. Expressed in peripheral blood mononuclear cells.

The protein localises to the lysosome membrane. Its subcellular location is the cytoplasm. It localises to the cytosol. Its function is as follows. Binding partner of the GTPase-activating protein FLCN: involved in the cellular response to amino acid availability by regulating the non-canonical mTORC1 signaling cascade controlling the MiT/TFE factors TFEB and TFE3. Required to promote FLCN recruitment to lysosomes and interaction with Rag GTPases, leading to activation of the non-canonical mTORC1 signaling. In low-amino acid conditions, component of the lysosomal folliculin complex (LFC) on the membrane of lysosomes, which inhibits the GTPase-activating activity of FLCN, thereby inactivating mTORC1 and promoting nuclear translocation of TFEB and TFE3. Upon amino acid restimulation, disassembly of the LFC complex liberates the GTPase-activating activity of FLCN, leading to activation of mTORC1 and subsequent inactivation of TFEB and TFE3. Together with FLCN, regulates autophagy: following phosphorylation by ULK1, interacts with GABARAP and promotes autophagy. In addition to its role in mTORC1 signaling, also acts as a co-chaperone of HSP90AA1/Hsp90: following gradual phosphorylation by CK2, inhibits the ATPase activity of HSP90AA1/Hsp90, leading to activate both kinase and non-kinase client proteins of HSP90AA1/Hsp90. Acts as a scaffold to load client protein FLCN onto HSP90AA1/Hsp90. Competes with the activating co-chaperone AHSA1 for binding to HSP90AA1, thereby providing a reciprocal regulatory mechanism for chaperoning of client proteins. Also acts as a core component of the reductive stress response by inhibiting activation of mitochondria in normal conditions: in response to reductive stress, the conserved Cys degron is reduced, leading to recognition and polyubiquitylation by the CRL2(FEM1B) complex, followed by proteasomal. Required for B-cell development. The protein is Folliculin-interacting protein 1 of Homo sapiens (Human).